Reading from the N-terminus, the 394-residue chain is MEPILALLLALGPFQLSRGQSFQVNPPEPEVAVAMGTSLQINCSMSCDKDIARVHWHGLDTNLGNVQTLPGSRVLSVRGMLSDTGTRVCVGSCGSRSFQHSVKILVYAFPDQLEVTPEFLVPGRDQVVSCTAHNIWPAGPDSLSFALLRGEQSLEGAQALETEQEEEMQETEGTPLFQVTQRWLLPSLGTPALPALYCQVTMQLPKLVLTHRRKIPVLQSQTSPEPPSTTSAKPYILTSSHTTKAVSTGLSSVALPSTPLSSEGPCYPEIHQNPEADWELLCEASCGSGVTVHWTLAPGDLAAYHKREAGAQAWLSVLPLGPIPEGWFQCRMDPGGQVTSLYVTGQVIPNPSSMVALWIGSLVLGLLALAFLAYCLWKRYRPGPLPDSSSCTLL.

A signal peptide spans 1–19 (MEPILALLLALGPFQLSRG). Ig-like domains lie at 20 to 107 (QSFQ…ILVY), 108 to 225 (AFPD…TSPE), and 256 to 345 (PSTP…YVTG). Over 20–353 (QSFQVNPPEP…TGQVIPNPSS (334 aa)) the chain is Extracellular. N42 carries N-linked (GlcNAc...) asparagine glycosylation. 3 cysteine pairs are disulfide-bonded: C43-C89, C47-C93, and C130-C198. Residues 219-255 (QSQTSPEPPSTTSAKPYILTSSHTTKAVSTGLSSVAL) are mucin-like. C282 and C330 form a disulfide bridge. A helical membrane pass occupies residues 354–374 (MVALWIGSLVLGLLALAFLAY). Residues 375-394 (CLWKRYRPGPLPDSSSCTLL) lie on the Cytoplasmic side of the membrane.

Homodimer. Detected in Peyer patches and mesenteric lymph nodes but not in spleen.

The protein localises to the membrane. Functionally, cell adhesion leukocyte receptor expressed by mucosal venules, helps to direct lymphocyte traffic into mucosal tissues including the Peyer patches and the intestinal lamina propria. It can bind both the integrin alpha-4/beta-7 and L-selectin, regulating both the passage and retention of leukocytes. The polypeptide is Mucosal addressin cell adhesion molecule 1 (Madcam1) (Rattus norvegicus (Rat)).